The primary structure comprises 218 residues: Ribose-5-phosphate isomerase A (218 aa).

Residues 28–31 (TGST), 81–84 (DSAD), and 94–97 (KGKG) each bind substrate. The active-site Proton acceptor is the Glu-103. Lys-121 lines the substrate pocket.

It belongs to the ribose 5-phosphate isomerase family. In terms of assembly, homodimer.

It catalyses the reaction aldehydo-D-ribose 5-phosphate = D-ribulose 5-phosphate. The protein operates within carbohydrate degradation; pentose phosphate pathway; D-ribose 5-phosphate from D-ribulose 5-phosphate (non-oxidative stage): step 1/1. Its function is as follows. Catalyzes the reversible conversion of ribose-5-phosphate to ribulose 5-phosphate. The chain is Ribose-5-phosphate isomerase A from Blochmanniella pennsylvanica (strain BPEN).